Consider the following 330-residue polypeptide: Diacylglycerol kinase (330 aa).

The region spanning 1–132 is the DAGKc domain; the sequence is MRKCARIIYN…VDIGKMNNRY (132 aa). Residues 10–14, T41, 67–73, and T94 contribute to the ATP site; these read NPTSG and GDGTLNE. Residues K213, D216, and H218 each contribute to the Mg(2+) site. Catalysis depends on E273, which acts as the Proton acceptor.

It belongs to the diacylglycerol/lipid kinase family. As to quaternary structure, homodimer. Mg(2+) serves as cofactor.

The catalysed reaction is a 1,2-diacyl-sn-glycerol + ATP = a 1,2-diacyl-sn-glycero-3-phosphate + ADP + H(+). Catalyzes the phosphorylation of diacylglycerol (DAG) into phosphatidic acid. Is a key enzyme involved in the production of lipoteichoic acid by reintroducing DAG formed from the breakdown of membrane phospholipids into the phosphatidylglycerol biosynthetic pathway. The chain is Diacylglycerol kinase (dagK) from Staphylococcus haemolyticus (strain JCSC1435).